The sequence spans 367 residues: Protein pxr1 (367 aa).

Disordered stretches follow at residues 1–28 (MGLS…TDSF) and 156–336 (KALK…PMGI). Residues 15 to 27 (DPNNTKWSGNTDS) are compositionally biased toward polar residues. In terms of domain architecture, G-patch spans 25 to 79 (TDSFGHRMMKSQGWTPGEYLGAKDAAHAEFHTAANASHIRVVIKDNNLGLGAKIG). The segment covering 167–182 (SSDDSDSSSDEEEEEK) has biased composition (acidic residues). Basic residues-rich tracts occupy residues 209 to 221 (SKKS…SKKR), 236 to 248 (KSKK…KSKS), and 265 to 277 (KARK…KKRR). The segment covering 282 to 296 (ATAGADTEETSSTSK) has biased composition (low complexity). Basic residues predominate over residues 297–309 (SSKKNSKKDKHKS). Residues 310–328 (SSASESSTKESTPTVTESS) are compositionally biased toward low complexity.

It belongs to the PINX1 family.

It is found in the nucleus. Its subcellular location is the nucleolus. Functionally, involved in rRNA-processing at A0, A1 and A2 sites and negatively regulates telomerase. The polypeptide is Protein pxr1 (pxr1) (Sclerotinia sclerotiorum (strain ATCC 18683 / 1980 / Ss-1) (White mold)).